A 704-amino-acid chain; its full sequence is Pentatricopeptide repeat-containing protein At4g28010 (704 aa).

PPR repeat units follow at residues 71 to 105, 106 to 140, 141 to 175, 176 to 210, 211 to 245, 246 to 280, 281 to 315, 316 to 350, 351 to 385, 386 to 416, 423 to 453, 458 to 492, 493 to 527, 528 to 562, 563 to 597, 598 to 632, and 633 to 667; these read LAFAGNNLMAKLVRSRNHELAFSFYRKMLETDTFI, NFVSLSGLLECYVQMRKTGFAFGVLALMLKRGFAF, NVYNHNILLKGLCRNLECGKAVSLLREMRRNSLMP, DVFSYNTVIRGFCEGKELEKALELANEMKGSGCSW, SLVTWGILIDAFCKAGKMDEAMGFLKEMKFMGLEA, DLVVYTSLIRGFCDCGELDRGKALFDEVLERGDSP, CAITYNTLIRGFCKLGQLKEASEIFEFMIERGVRP, NVYTYTGLIDGLCGVGKTKEALQLLNLMIEKDEEP, NAVTYNIIINKLCKDGLVADAVEIVELMKKRRTRP, DNITYNILLGGLCAKGDLDEASKLLYLMLKD, DVISYNALIHGLCKENRLHQALDIYDLLVEK, DRVTTNILLNSTLKAGDVNKAMELWKQISDSKIVR, NSDTYTAMIDGFCKTGMLNVAKGLLCKMRVSELQP, SVFDYNCLLSSLCKEGSLDQAWRLFEEMQRDNNFP, DVVSFNIMIDGSLKAGDIKSAESLLVGMSRAGLSP, DLFTYSKLINRFLKLGYLDEAISFFDKMVDSGFEP, and DAHICDSVLKYCISQGETDKLTELVKKLVDKDIVL.

This sequence belongs to the PPR family. P subfamily.

The chain is Pentatricopeptide repeat-containing protein At4g28010 from Arabidopsis thaliana (Mouse-ear cress).